We begin with the raw amino-acid sequence, 80 residues long: WAP four-disulfide core domain protein 15B (80 aa).

Residues 1–20 (MKLLGLSLLAVTILLCCNMA) form the signal peptide. The WAP domain occupies 29–76 (VFSKPGYCPEYRVPCPFVLIPKCRRDKGCKDALKCCFFYCQMRCVDPW). 4 disulfide bridges follow: cysteine 36/cysteine 64, cysteine 43/cysteine 68, cysteine 51/cysteine 63, and cysteine 57/cysteine 72.

Constitutively expressed in kidney and epididymis.

The protein localises to the secreted. Its function is as follows. Antibacterial protein which inhibits the growth of E.coli and S.aureus. This is WAP four-disulfide core domain protein 15B (Wfdc15b) from Mus musculus (Mouse).